We begin with the raw amino-acid sequence, 330 residues long: Ribosomal RNA small subunit methyltransferase C (330 aa).

It belongs to the methyltransferase superfamily. RsmC family. Monomer.

It is found in the cytoplasm. The enzyme catalyses guanosine(1207) in 16S rRNA + S-adenosyl-L-methionine = N(2)-methylguanosine(1207) in 16S rRNA + S-adenosyl-L-homocysteine + H(+). Its function is as follows. Specifically methylates the guanine in position 1207 of 16S rRNA in the 30S particle. This is Ribosomal RNA small subunit methyltransferase C from Haemophilus influenzae (strain ATCC 51907 / DSM 11121 / KW20 / Rd).